A 283-amino-acid chain; its full sequence is MNPTETKAIPVSQQMEGPHLPNKKKHKKQAVKTEPEKKSQSTKLSVVHEKKSQEGKPKEHTEQKSLPKPASDTGSKDAHNKKAVSRSAEQQPSEKSTEPKTEPQDMVSAGGESVAGVAATSGKPGDKKKEKKSLTPAVPVESKPDKPSGKSGMDAALDDLIDTLGGPEEIEEENTTYTGPEVSDPMSSTYIEELGKREVTIPPKYRELLAKNEGITGPPADSSKPVGPDDAIDALSSDFTCGSPTAAGKKTEKEESTEVLKAQSAGTVRSAAPPQEKKRKVEK.

The segment covering 1-15 has biased composition (polar residues); sequence MNPTETKAIPVSQQM. 2 disordered regions span residues 1 to 186 and 212 to 283; these read MNPT…SDPM and NEGI…KVEK. Basic residues predominate over residues 21–30; that stretch reads PNKKKHKKQA. A Glycyl lysine isopeptide (Lys-Gly) (interchain with G-Cter in SUMO2) cross-link involves residue Lys-32. The segment covering 46 to 65 has biased composition (basic and acidic residues); the sequence is VVHEKKSQEGKPKEHTEQKS. Residue Lys-50 is modified to N6-acetyllysine. Ser-87 is subject to Phosphoserine. The segment covering 107 to 122 has biased composition (low complexity); the sequence is VSAGGESVAGVAATSG. At Ser-133 the chain carries Phosphoserine. The residue at position 135 (Thr-135) is a Phosphothreonine. The stretch at 170-222 is one Inhibitory domain 1 repeat; it reads IEEENTTYTGPEVSDPMSSTYIEELGKREVTIPPKYRELLAKNEGITGPPADS. 2 positions are modified to phosphoserine: Ser-222 and Ser-243. Positions 249–258 are enriched in basic and acidic residues; sequence KKTEKEESTE.

The protein belongs to the protease inhibitor I27 (calpastatin) family.

Functionally, specific inhibition of calpain (calcium-dependent cysteine protease). Plays a key role in postmortem tenderization of meat and have been proposed to be involved in muscle protein degradation in living tissue. This is Calpastatin (CAST) from Chlorocebus aethiops (Green monkey).